Here is a 338-residue protein sequence, read N- to C-terminus: Glycerol-3-phosphate dehydrogenase [NAD(P)+] (338 aa).

Ser13, Trp14, and Lys108 together coordinate NADPH. 3 residues coordinate sn-glycerol 3-phosphate: Lys108, Gly139, and Ser141. Ala143 contacts NADPH. The sn-glycerol 3-phosphate site is built by Lys194, Asp247, Ser257, Arg258, and Asn259. Lys194 (proton acceptor) is an active-site residue. Arg258 contacts NADPH. Positions 282 and 284 each coordinate NADPH.

Belongs to the NAD-dependent glycerol-3-phosphate dehydrogenase family.

It is found in the cytoplasm. The catalysed reaction is sn-glycerol 3-phosphate + NAD(+) = dihydroxyacetone phosphate + NADH + H(+). It catalyses the reaction sn-glycerol 3-phosphate + NADP(+) = dihydroxyacetone phosphate + NADPH + H(+). The protein operates within membrane lipid metabolism; glycerophospholipid metabolism. Functionally, catalyzes the reduction of the glycolytic intermediate dihydroxyacetone phosphate (DHAP) to sn-glycerol 3-phosphate (G3P), the key precursor for phospholipid synthesis. In Streptococcus suis (strain 98HAH33), this protein is Glycerol-3-phosphate dehydrogenase [NAD(P)+].